The chain runs to 257 residues: Large ribosomal subunit protein uL3 (257 aa).

A disordered region spans residues 232 to 257 (LKAPKKQKTKVETNQVNPKIEEEKTK).

Belongs to the universal ribosomal protein uL3 family. Part of the 50S ribosomal subunit. Forms a cluster with proteins L14 and L19.

Functionally, one of the primary rRNA binding proteins, it binds directly near the 3'-end of the 23S rRNA, where it nucleates assembly of the 50S subunit. The chain is Large ribosomal subunit protein uL3 from Mycoplasma genitalium (strain ATCC 33530 / DSM 19775 / NCTC 10195 / G37) (Mycoplasmoides genitalium).